The sequence spans 906 residues: Coatomer subunit beta' (906 aa).

WD repeat units lie at residues 13 to 52 (ARSDRVKSVDLHPTEPWMLASLYNGSVCVWNHETQTLVKT), 55 to 94 (VCDLPVRAAKFVARKNWVVTGADDMQIRVFNYNTLERVHM), 97 to 136 (AHSDYIRCIAVHPTQPFILTSSDDMLIKLWDWDKKWSCSQ), 140 to 180 (GHTH…PNFT), 183 to 224 (GHEK…CVQT), 227 to 266 (GHAQNVSCASFHPELPIIITGSEDGTVRIWHSSTYRLEST), 350 to 388 (SCEIYPQTIQHNPNGRFVVVCGDGEYIIYTAMALRNKSF), and 390 to 425 (SAQEFAWAHDSSEYAIRESNSVVKIFKNFKEKKSFK). Lysine 627 carries the post-translational modification N6-acetyllysine. One copy of the WD 9 repeat lies at 746 to 783 (IRTGRLPEAAFLARTYLPSQVSRVVKLWRENLSKVNQK). The disordered stretch occupies residues 837 to 872 (EEAKGFQPSRSAAQQELDGKPASPTPVIVTSQTANK). Phosphoserine is present on serine 859. Threonine 861 is subject to Phosphothreonine. Positions 866–891 (TSQTANKEEKSLLELEVDLDNLEIED) form a coiled coil.

It belongs to the WD repeat COPB2 family. As to quaternary structure, oligomeric complex that consists of at least the alpha, beta, beta', gamma, delta, epsilon and zeta subunits. Probably interacts with PEX11A. Interacts with SCYL1. Interacts with JAGN1.

It localises to the cytoplasm. It is found in the cytosol. The protein localises to the golgi apparatus membrane. The protein resides in the cytoplasmic vesicle. Its subcellular location is the COPI-coated vesicle membrane. The coatomer is a cytosolic protein complex that binds to dilysine motifs and reversibly associates with Golgi non-clathrin-coated vesicles, which further mediate biosynthetic protein transport from the ER, via the Golgi up to the trans Golgi network. Coatomer complex is required for budding from Golgi membranes, and is essential for the retrograde Golgi-to-ER transport of dilysine-tagged proteins. In mammals, the coatomer can only be recruited by membranes associated to ADP-ribosylation factors (ARFs), which are small GTP-binding proteins; the complex also influences the Golgi structural integrity, as well as the processing, activity, and endocytic recycling of LDL receptors. Functionally, this coatomer complex protein, essential for Golgi budding and vesicular trafficking, is a selective binding protein (RACK) for protein kinase C, epsilon type. It binds to Golgi membranes in a GTP-dependent manner. The chain is Coatomer subunit beta' (COPB2) from Bos taurus (Bovine).